We begin with the raw amino-acid sequence, 55 residues long: Large ribosomal subunit protein bL33A (55 aa).

The protein belongs to the bacterial ribosomal protein bL33 family.

The protein is Large ribosomal subunit protein bL33A of Mycolicibacterium vanbaalenii (strain DSM 7251 / JCM 13017 / BCRC 16820 / KCTC 9966 / NRRL B-24157 / PYR-1) (Mycobacterium vanbaalenii).